Consider the following 158-residue polypeptide: Large ribosomal subunit protein uL15 (158 aa).

Disordered regions lie at residues 1–53 and 138–158; these read MRIH…FEGG and ESAGGSCQDLSDTSNAPSNNE. A compositionally biased stretch (gly residues) spans 23-35; that stretch reads ISAGQGASGGFGM. Positions 145 to 158 are enriched in polar residues; sequence QDLSDTSNAPSNNE.

It belongs to the universal ribosomal protein uL15 family. Part of the 50S ribosomal subunit.

Binds to the 23S rRNA. This is Large ribosomal subunit protein uL15 from Crocosphaera subtropica (strain ATCC 51142 / BH68) (Cyanothece sp. (strain ATCC 51142)).